The chain runs to 372 residues: Steroid C26-monooxygenase (372 aa).

Cys-314 is a binding site for heme.

This sequence belongs to the cytochrome P450 family. Requires heme as cofactor.

It carries out the reaction cholest-4-en-3-one + 6 reduced [2Fe-2S]-[ferredoxin] + 3 O2 + 5 H(+) = (25R)-3-oxocholest-4-en-26-oate + 6 oxidized [2Fe-2S]-[ferredoxin] + 4 H2O. The protein operates within steroid metabolism; cholesterol degradation. Functionally, involved in the utilization of cholesterol as the sole carbon and energy source by degrading the side chain during infection. Primarily catalyzes the sequential oxidation of the terminal methyl of cholest-4-en-3-one into (25R)-26-hydroxycholest-4-en-3-one (alcohol), (25R)-26-oxocholest-4-en-3-one (aldehyde), to finally yield the carboxylic acid (25R)-3-oxocholest-4-en-26-oate. Also able to sequentially oxidize cholesterol itself, not only cholest-4-en-3-one. The polypeptide is Steroid C26-monooxygenase (cyp142) (Mycobacterium tuberculosis (strain CDC 1551 / Oshkosh)).